The following is a 258-amino-acid chain: Ribosomal RNA large subunit methyltransferase E (258 aa).

S-adenosyl-L-methionine-binding residues include Gly-58, Trp-60, Asp-78, Asp-96, and Asp-120. Catalysis depends on Lys-160, which acts as the Proton acceptor.

This sequence belongs to the class I-like SAM-binding methyltransferase superfamily. RNA methyltransferase RlmE family.

It is found in the cytoplasm. The enzyme catalyses uridine(2552) in 23S rRNA + S-adenosyl-L-methionine = 2'-O-methyluridine(2552) in 23S rRNA + S-adenosyl-L-homocysteine + H(+). Specifically methylates the uridine in position 2552 of 23S rRNA at the 2'-O position of the ribose in the fully assembled 50S ribosomal subunit. The protein is Ribosomal RNA large subunit methyltransferase E of Methanococcus maripaludis (strain DSM 14266 / JCM 13030 / NBRC 101832 / S2 / LL).